Reading from the N-terminus, the 573-residue chain is Adenine deaminase 2 (573 aa).

The protein belongs to the metallo-dependent hydrolases superfamily. Adenine deaminase family. Mn(2+) serves as cofactor.

It carries out the reaction adenine + H2O + H(+) = hypoxanthine + NH4(+). The polypeptide is Adenine deaminase 2 (Shouchella clausii (strain KSM-K16) (Alkalihalobacillus clausii)).